A 591-amino-acid polypeptide reads, in one-letter code: V-type ATP synthase alpha chain (591 aa).

233 to 240 (GPFGAGKT) contributes to the ATP binding site.

Belongs to the ATPase alpha/beta chains family.

The catalysed reaction is ATP + H2O + 4 H(+)(in) = ADP + phosphate + 5 H(+)(out). Functionally, produces ATP from ADP in the presence of a proton gradient across the membrane. The V-type alpha chain is a catalytic subunit. The chain is V-type ATP synthase alpha chain from Streptococcus pyogenes serotype M12 (strain MGAS2096).